The primary structure comprises 262 residues: Indole-3-glycerol phosphate synthase (262 aa).

This sequence belongs to the TrpC family.

It carries out the reaction 1-(2-carboxyphenylamino)-1-deoxy-D-ribulose 5-phosphate + H(+) = (1S,2R)-1-C-(indol-3-yl)glycerol 3-phosphate + CO2 + H2O. It functions in the pathway amino-acid biosynthesis; L-tryptophan biosynthesis; L-tryptophan from chorismate: step 4/5. The protein is Indole-3-glycerol phosphate synthase of Bordetella avium (strain 197N).